The chain runs to 205 residues: StAR-related lipid transfer protein 4 (205 aa).

The region spanning 1–205 (MEGLSDVASF…NFYGDLRKAL (205 aa)) is the START domain.

The enzyme catalyses cholesterol(in) = cholesterol(out). Functionally, involved in the intracellular transport of cholesterol. Binds cholesterol or other sterols. This chain is StAR-related lipid transfer protein 4 (STARD4), found in Homo sapiens (Human).